A 157-amino-acid polypeptide reads, in one-letter code: Small ribosomal subunit protein uS7 (157 aa).

The protein belongs to the universal ribosomal protein uS7 family. In terms of assembly, part of the 30S ribosomal subunit. Contacts proteins S9 and S11.

One of the primary rRNA binding proteins, it binds directly to 16S rRNA where it nucleates assembly of the head domain of the 30S subunit. Is located at the subunit interface close to the decoding center, probably blocks exit of the E-site tRNA. The chain is Small ribosomal subunit protein uS7 from Opitutus terrae (strain DSM 11246 / JCM 15787 / PB90-1).